Here is a 280-residue protein sequence, read N- to C-terminus: Energy-coupling factor transporter ATP-binding protein EcfA1 (280 aa).

Residues 6–241 (LRIENISFQY…SHMLQEIGLD (236 aa)) enclose the ABC transporter domain. 40-47 (GQNGSGKS) is a binding site for ATP.

The protein belongs to the ABC transporter superfamily. Energy-coupling factor EcfA family. Forms a stable energy-coupling factor (ECF) transporter complex composed of 2 membrane-embedded substrate-binding proteins (S component), 2 ATP-binding proteins (A component) and 2 transmembrane proteins (T component).

It is found in the cell membrane. Its function is as follows. ATP-binding (A) component of a common energy-coupling factor (ECF) ABC-transporter complex. Unlike classic ABC transporters this ECF transporter provides the energy necessary to transport a number of different substrates. This Bacillus cereus (strain ATCC 14579 / DSM 31 / CCUG 7414 / JCM 2152 / NBRC 15305 / NCIMB 9373 / NCTC 2599 / NRRL B-3711) protein is Energy-coupling factor transporter ATP-binding protein EcfA1.